Here is a 212-residue protein sequence, read N- to C-terminus: Large ribosomal subunit protein uL3 (212 aa).

Residues 130-155 form a disordered region; it reads KRGNMTHGSKNHRLPGSTGAGTTPGR.

Belongs to the universal ribosomal protein uL3 family. In terms of assembly, part of the 50S ribosomal subunit. Forms a cluster with proteins L14 and L19.

In terms of biological role, one of the primary rRNA binding proteins, it binds directly near the 3'-end of the 23S rRNA, where it nucleates assembly of the 50S subunit. The sequence is that of Large ribosomal subunit protein uL3 from Rippkaea orientalis (strain PCC 8801 / RF-1) (Cyanothece sp. (strain PCC 8801)).